A 440-amino-acid chain; its full sequence is Sequestosome-1 (440 aa).

Position 2 is an N-acetylalanine (A2). Residues 2-50 (ASLTVKAYLLGKEDAAREIRRFSFCCSPEPEAEAEAAAGPGPCERLLSR) are interaction with LCK. Residues 3–102 (SLTVKAYLLG…DIFRIYIKEK (100 aa)) form the PB1 domain. Position 24 is a phosphoserine (S24). Residues 43–107 (PCERLLSRVA…YIKEKKECRR (65 aa)) are interaction with PRKCZ and dimerization. The interval 50–80 (RVAALFPALRPGGFQAHYRDEDGDLVAFSSD) is interaction with PAWR. A Glycyl lysine isopeptide (Lys-Gly) (interchain with G-Cter in ubiquitin) cross-link involves residue K91. The interaction with GABRR3 stretch occupies residues 122–224 (VHPNVICDGC…EARPGPTAES (103 aa)). The ZZ-type zinc finger occupies 123–173 (HPNVICDGCNGPVVGTRYKCSVCPDYDLCSVCEGKGLHRGHTKLAFPSPFG). Zn(2+) contacts are provided by C128, C131, C142, and C145. Y148 carries the post-translational modification Phosphotyrosine. Positions 151, 154, 160, and 163 each coordinate Zn(2+). S170 and S176 each carry phosphoserine. The segment at 170–220 (SPFGHLSEGFSHSRWLRKVKHGHFGWPGWEMGPPGNWSPRPPRAGEARPGP) is LIM protein-binding (LB). A Glycyl lysine isopeptide (Lys-Gly) (interchain with G-Cter in ubiquitin) cross-link involves residue K189. Positions 196–235 (PGWEMGPPGNWSPRPPRAGEARPGPTAESASGPSEDPSVN) are disordered. Phosphoserine is present on residues S207, S233, S249, and S266. Residues 228-233 (PSEDPS) carry the TRAF6-binding motif. A disordered region spans residues 264–390 (KRSRLTPVSP…ALYPHLPPEA (127 aa)). Position 269 is a phosphothreonine (T269). The tract at residues 269-440 (TPVSPESSST…IQYSKHPPPL (172 aa)) is interaction with NTRK1. S272 and S282 each carry phosphoserine. Residues 283–296 (SSQPSSCCSDPSKP) show a composition bias toward low complexity. S-palmitoyl cysteine attachment occurs at residues C289 and C290. Position 306 is a phosphoserine (S306). The segment covering 310–324 (QMRKIALESEGRPEE) has biased composition (basic and acidic residues). Positions 321–342 (RPEEQMESDNCSGGDDDWTHLS) are MAP1LC3B-binding. Phosphoserine occurs at positions 328 and 332. The short motif at 336 to 341 (DDWTHL) is the LIR element. The span at 337-347 (DWTHLSSKEVD) shows a compositional bias: basic and acidic residues. Residues 347–352 (DPSTGE) are interaction with KEAP1. S349 is subject to Phosphoserine; by ULK1. Residues 351 to 373 (GELQSLQMPESEGPSSLDPSQEG) show a composition bias toward polar residues. S355, S361, S365, and S366 each carry phosphoserine. A UBA domain is found at 389-434 (EADPRLIESLSQMLSMGFSDEGGWLTRLLQTKNYDIGAALDTIQYS). S403 carries the phosphoserine; by CK2, ULK1 and TBK1 modification. At S407 the chain carries Phosphoserine; by ULK1. An N6-acetyllysine; alternate mark is found at K420 and K435. K420 participates in a covalent cross-link: Glycyl lysine isopeptide (Lys-Gly) (interchain with G-Cter in ubiquitin); alternate. K435 is covalently cross-linked (Glycyl lysine isopeptide (Lys-Gly) (interchain with G-Cter in SUMO2); alternate).

As to quaternary structure, homooligomer or heterooligomer; may form homotypic arrays. Dimerization interferes with ubiquitin binding. Component of a ternary complex with PAWR and PRKCZ. Forms a complex with JUB/Ajuba, PRKCZ and TRAF6. Identified in a complex with TRAF6 and CYLD. Identified in a heterotrimeric complex with ubiquitin and ZFAND5, where ZFAND5 and SQSTM1 both interact with the same ubiquitin molecule. Interacts (via LIR motif) with MAP1LC3A and MAP1LC3B, as well as with other ATG8 family members, including GABARAP, GABARAPL1 and GABARAPL2; these interactions are necessary for the recruitment MAP1 LC3 family members to inclusion bodies containing polyubiquitinated protein aggregates and for their degradation by autophagy. Interacts directly with PRKCI and PRKCZ. Interacts with EBI3, LCK, RASA1, NR2F2, NTRK1, NTRK2, NTRK3, NBR1, MAP2K5 and MAPKAPK5. Upon TNF-alpha stimulation, interacts with RIPK1 probably bridging IKBKB to the TNF-R1 complex composed of TNF-R1/TNFRSF1A, TRADD and RIPK1. Interacts with the proteasome subunits PSMD4 and PSMC2. Interacts with TRAF6. Interacts with 'Lys-63'-linked polyubiquitinated MAPT/TAU. Interacts with FHOD3. Interacts with CYLD. Interacts with SESN1. Interacts with SESN2. Interacts with ULK1. Interacts with UBD. Interacts with WDR81; the interaction is direct and regulates the interaction of SQSTM1 with ubiquitinated proteins. Interacts with WDFY3; this interaction is required to recruit WDFY3 to cytoplasmic bodies and to PML bodies. Interacts with LRRC25. Interacts with STING1; leading to relocalization of STING1 to autophagosomes. Interacts (when phosphorylated at Ser-349) with KEAP1; the interaction is direct and inactivates the BCR(KEAP1) complex by sequestering KEAP1 in inclusion bodies, promoting its degradation. Interacts with MOAP1; promoting dissociation of SQSTM1 inclusion bodies that sequester KEAP1. Interacts with GBP1. Interacts with TAX1BP1. Interacts with (ubiquitinated) PEX5; specifically binds PEX5 ubiquitinated at 'Lys-209' in response to reactive oxygen species (ROS). Interacts (via PB1 domain) with TNS2; the interaction leads to sequestration of TNS2 in cytoplasmic aggregates with SQSTM1 and promotes TNS2 ubiquitination and proteasomal degradation. Interacts with IRS1; the interaction is disrupted by the presence of tensin TNS2. Interacts with TRIM5. Interacts with TRIM11 (when ubiquitinated); promoting AIM2 recruitment to autophagosomes and autophagy-dependent degradation of AIM2. Interacts with TRIM13. Interacts with TRIM16. Interacts with TRIM23. Interacts with TRIM50. Interacts with TRIM55. Interacts with ECSIT; this interaction inhibits TLR4 signaling via functional regulation of the TRAF6-ECSIT complex. Interacts with GABRR1, GABRR2 and GABRR3. Interacts with WDR83. Interacts with GRB2. Interacts with USP12; the interaction is independent of USP12 deubiquitinase activity and may be involved in regulation of autophagic flux. Interacts with ASB6. In terms of processing, phosphorylation at Ser-407 by ULK1 destabilizes the UBA dimer interface and increases binding affinity to ubiquitinated proteins. Phosphorylation at Ser-407 also primes for subsequent phosphorylation at Ser-403. Phosphorylation at Ser-403 by CK2 or ULK1 promotes binding to ubiquitinated proteins by increasing the affinity between the UBA domain and polyubiquitin chains. Phosphorylation at Ser-403 by ULK1 is stimulated by SESN2. Phosphorylated at Ser-403 by TBK1, leading to promote relocalization of 'Lys-63'-linked ubiquitinated STING1 to autophagosomes. Phosphorylation at Ser-349 by ULK1 promotes interaction with KEAP1 and inactivation of the BCR(KEAP1) complex, promoting NFE2L2/NRF2 nuclear accumulation and expression of phase II detoxifying enzymes. Phosphorylated in vitro by TTN. Ubiquitinated by UBE2J1 and RNF26 at Lys-435: ubiquitinated SQSTM1 attracts specific vesicle-associated adapters, forming a molecular bridge that restrains cognate vesicles in the perinuclear region and organizes the endosomal pathway for efficient cargo transport. Ubiquitination by UBE2D2 and UBE2D3 increases its ability to bind polyubiquitin chains by destabilizing the UBA dimer interface. Deubiquitination by USP15 releases target vesicles for fast transport into the cell periphery. Ubiquitinated by the BCR(KEAP1) complex at Lys-420, increasing SQSTM1 sequestering activity and promoting its degradation. Ubiquitinated via 'Lys-29' and 'Lys-33'-linked polyubiquitination leading to xenophagic targeting of bacteria and inhibition of their replication. Post-translationally, acetylated at Lys-420 and Lys-435 by KAT5/TIP60, promotes activity by destabilizing the UBA dimer interface and increases binding affinity to ubiquitinated proteins. Deacetylated by HDAC6. In terms of processing, palmitoylation at Cys-289 and Cys-290 by ZDHHC19 is required for efficient autophagic degradation of SQSTM1-cargo complexes by promoting affinity for ATG8 proteins and recruitment of p62 bodies to autophagosomes. Dealmitoylated at Cys-289 and Cys-290 by LYPLA1. (Microbial infection) Cleaved by S.pyogenes SpeB protease; leading to its degradation. Degradation by SpeB prevents autophagy, promoting to S.pyogenes intracellular replication. Post-translationally, (Microbial infection) Deubiquitinated by Epstein-Barr virus BPLF1; leading to inhibition of the recruitment of MAP1LC3A/LC3 to SQSTM1-positive structures. Ubiquitously expressed.

It localises to the cytoplasmic vesicle. The protein localises to the autophagosome. Its subcellular location is the preautophagosomal structure. The protein resides in the cytoplasm. It is found in the cytosol. It localises to the nucleus. The protein localises to the PML body. Its subcellular location is the late endosome. The protein resides in the lysosome. It is found in the endoplasmic reticulum. It localises to the myofibril. The protein localises to the sarcomere. Molecular adapter required for selective macroautophagy (aggrephagy) by acting as a bridge between polyubiquitinated proteins and autophagosomes. Promotes the recruitment of ubiquitinated cargo proteins to autophagosomes via multiple domains that bridge proteins and organelles in different steps. SQSTM1 first mediates the assembly and removal of ubiquitinated proteins by undergoing liquid-liquid phase separation upon binding to ubiquitinated proteins via its UBA domain, leading to the formation of insoluble cytoplasmic inclusions, known as p62 bodies. SQSTM1 then interacts with ATG8 family proteins on autophagosomes via its LIR motif, leading to p62 body recruitment to autophagosomes, followed by autophagic clearance of ubiquitinated proteins. SQSTM1 is itself degraded along with its ubiquitinated cargos. Also required to recruit ubiquitinated proteins to PML bodies in the nucleus. Also involved in autophagy of peroxisomes (pexophagy) in response to reactive oxygen species (ROS) by acting as a bridge between ubiquitinated PEX5 receptor and autophagosomes. Acts as an activator of the NFE2L2/NRF2 pathway via interaction with KEAP1: interaction inactivates the BCR(KEAP1) complex by sequestering the complex in inclusion bodies, promoting nuclear accumulation of NFE2L2/NRF2 and subsequent expression of cytoprotective genes. Promotes relocalization of 'Lys-63'-linked ubiquitinated STING1 to autophagosomes. Involved in endosome organization by retaining vesicles in the perinuclear cloud: following ubiquitination by RNF26, attracts specific vesicle-associated adapters, forming a molecular bridge that restrains cognate vesicles in the perinuclear region and organizes the endosomal pathway for efficient cargo transport. Sequesters tensin TNS2 into cytoplasmic puncta, promoting TNS2 ubiquitination and proteasomal degradation. May regulate the activation of NFKB1 by TNF-alpha, nerve growth factor (NGF) and interleukin-1. May play a role in titin/TTN downstream signaling in muscle cells. Adapter that mediates the interaction between TRAF6 and CYLD. This Homo sapiens (Human) protein is Sequestosome-1.